Reading from the N-terminus, the 194-residue chain is UPF0215 protein DR_A0167 (194 aa).

The protein belongs to the UPF0215 family.

The polypeptide is UPF0215 protein DR_A0167 (Deinococcus radiodurans (strain ATCC 13939 / DSM 20539 / JCM 16871 / CCUG 27074 / LMG 4051 / NBRC 15346 / NCIMB 9279 / VKM B-1422 / R1)).